We begin with the raw amino-acid sequence, 362 residues long: MAGSEDKRVVGTLHLLLLQATVLSLTAGNLSLVSAAWTQEKNHHQPAHLNSSSLQQVAEGTSISEMWQNDLRPLLIERYPGSPGSYSARQHIMQRIQRLQAEWVVEVDTFLSRTPYGYRSFSNIISTLNPEAKRHLVLACHYDSKYFPRWDSRVFVGATDSAVPCAMMLELARALDKKLHSLKDVSGSKPDLSLRLIFFDGEEAFHHWSPQDSLYGSRHLAQKMASSPHPPGSRGTNQLDGMDLLVLLDLIGAANPTFPNFFPKTTRWFNRLQAIEKELYELGLLKDHSLERKYFQNFGYGNIIQDDHIPFLRKGVPVLHLIASPFPEVWHTMDDNEENLHASTIDNLNKIIQVFVLEYLHL.

The N-terminal stretch at 1-35 is a signal peptide; the sequence is MAGSEDKRVVGTLHLLLLQATVLSLTAGNLSLVSA. 2 N-linked (GlcNAc...) asparagine glycosylation sites follow: Asn29 and Asn50. Cys140 and Cys165 are joined by a disulfide. Asp160 serves as a coordination point for Zn(2+). Residue Glu202 is the Proton acceptor of the active site. Glu203 is a binding site for Zn(2+). Asp249 (proton acceptor) is an active-site residue. His331 contacts Zn(2+).

This sequence belongs to the glutaminyl-peptide cyclotransferase family.

It localises to the secreted. It carries out the reaction N-terminal L-glutaminyl-[peptide] = N-terminal 5-oxo-L-prolyl-[peptide] + NH4(+). In terms of biological role, responsible for the biosynthesis of pyroglutamyl peptides. Has a bias against acidic and tryptophan residues adjacent to the N-terminal glutaminyl residue and a lack of importance of chain length after the second residue. This is Glutaminyl-peptide cyclotransferase (Qpct) from Mus musculus (Mouse).